Reading from the N-terminus, the 180-residue chain is Type-1 fimbrial protein, C chain (180 aa).

An N-terminal signal peptide occupies residues 1–23; it reads MKLKFISMAVFSALTLGVATNAS. The cysteines at positions 44 and 84 are disulfide-linked.

Belongs to the fimbrial protein family.

It localises to the fimbrium. Fimbriae (also called pili), polar filaments radiating from the surface of the bacterium to a length of 0.5-1.5 micrometers and numbering 100-300 per cell, enable bacteria to colonize the epithelium of specific host organs. The chain is Type-1 fimbrial protein, C chain (pilC) from Escherichia coli O6:H1 (strain CFT073 / ATCC 700928 / UPEC).